A 489-amino-acid polypeptide reads, in one-letter code: Corticosteroid-binding protein (489 aa).

It to yeast FMS1.

In terms of biological role, may be a flavoprotein with enzymatic activity. The protein is Corticosteroid-binding protein (CBP1) of Candida albicans (strain SC5314 / ATCC MYA-2876) (Yeast).